We begin with the raw amino-acid sequence, 253 residues long: Probable transcriptional regulatory protein SynRCC307_1833 (253 aa).

This sequence belongs to the TACO1 family.

It is found in the cytoplasm. This chain is Probable transcriptional regulatory protein SynRCC307_1833, found in Synechococcus sp. (strain RCC307).